A 195-amino-acid chain; its full sequence is Interferon omega-2 (195 aa).

The first 23 residues, 1–23 (MALLPSLLTALVVYELWPCGALG), serve as a signal peptide directing secretion. 2 disulfides stabilise this stretch: C24-C122 and C52-C162. N-linked (GlcNAc...) asparagine glycosylation occurs at N101.

Belongs to the alpha/beta interferon family.

Its subcellular location is the secreted. The sequence is that of Interferon omega-2 from Equus caballus (Horse).